A 409-amino-acid polypeptide reads, in one-letter code: Spermatogenesis-associated protein 2-like protein (409 aa).

3 disordered regions span residues 233–257, 270–299, and 313–337; these read EDEGSDEASLYGGPSPGPDSPTSEL, LWGAGGGPWEPAEVSSPTSGASEEEEPQPE, and RPGDLAPPHAPRSPEQASPPPIPEP.

Belongs to the SPATA2 family.

This is Spermatogenesis-associated protein 2-like protein (SPATA2L) from Bos taurus (Bovine).